A 73-amino-acid chain; its full sequence is Guanine nucleotide-binding protein G(I)/G(S)/G(O) subunit gamma-11 (73 aa).

The disordered stretch occupies residues 54–73; the sequence is VKGIPEDKNPFKEKGSCIIS. C70 is subject to Cysteine methyl ester. Residue C70 is the site of S-farnesyl cysteine attachment. A propeptide spans 71–73 (removed in mature form); sequence IIS.

The protein belongs to the G protein gamma family. G proteins are composed of 3 units, alpha, beta and gamma. Interacts with beta-1 and beta-3, but not with beta-2.

The protein resides in the cell membrane. Functionally, guanine nucleotide-binding proteins (G proteins) are involved as a modulator or transducer in various transmembrane signaling systems. The beta and gamma chains are required for the GTPase activity, for replacement of GDP by GTP, and for G protein-effector interaction. The polypeptide is Guanine nucleotide-binding protein G(I)/G(S)/G(O) subunit gamma-11 (GNG11) (Bos taurus (Bovine)).